We begin with the raw amino-acid sequence, 224 residues long: MRKASLELKGSSFTLSVLHINTSDLDSITLDLDKKLAQAPQFFIGAPLVLNLSAVEDGKLDLAALKDLLVSRQLVIVGVTGASEALSEQAKACGLASVKAGKQTQMPSPPSEPRTTRIVRQNVRSGQQIYVKNGDLIIFGAVGNGAEVIADGSIHIYGALRGKAMAGANGERDAVILASHLEPELISIAGQYWLTENLQKHGVTAKSGCVRLDGDSLTVEALPL.

The protein belongs to the MinC family. As to quaternary structure, interacts with MinD and FtsZ.

Functionally, cell division inhibitor that blocks the formation of polar Z ring septums. Rapidly oscillates between the poles of the cell to destabilize FtsZ filaments that have formed before they mature into polar Z rings. Prevents FtsZ polymerization. This is Probable septum site-determining protein MinC from Shewanella amazonensis (strain ATCC BAA-1098 / SB2B).